The primary structure comprises 209 residues: PRA1 family protein A1 (209 aa).

The next 4 membrane-spanning stretches (helical) occupy residues 51–73 (LYYYRTNYFIMIVVILGLGVLTR), 77–99 (IFAALLTALSLAFLNDSFAGSFS), 144–164 (VFVLTCSLVSFALWYISSGLL), and 166–186 (VSVALLIAHLATILHASLRTP).

It belongs to the PRA1 family.

The protein resides in the endoplasmic reticulum membrane. Functionally, may be involved in both secretory and endocytic intracellular trafficking in the endosomal/prevacuolar compartments. This is PRA1 family protein A1 (PRA1A1) from Arabidopsis thaliana (Mouse-ear cress).